We begin with the raw amino-acid sequence, 112 residues long: Thyroid transcription factor 1 (112 aa).

Positions 1 to 60 form a DNA-binding region, homeobox; sequence RRNRRVLFSQAQVYELERRFKQQKYLSAPEREHLASMIHLTPTQVKIWFQNHRYKMKRQA. Residues 59 to 100 are disordered; the sequence is QAKDKAAQQQLQQDSGGGGGGGGAGCPQQQQAQQQSPRRVAV. Residues 73-83 are compositionally biased toward gly residues; it reads SGGGGGGGGAG. The span at 84–93 shows a compositional bias: low complexity; that stretch reads CPQQQQAQQQ.

It belongs to the NK-2 homeobox family. Phosphorylated on serine residues.

The protein resides in the nucleus. Its function is as follows. Transcription factor that binds and activates the promoter of thyroid specific genes such as thyroglobulin, thyroperoxidase, and thyrotropin receptor. Crucial in the maintenance of the thyroid differentiation phenotype. May play a role in lung development and surfactant homeostasis. The sequence is that of Thyroid transcription factor 1 (TITF1) from Cavia porcellus (Guinea pig).